The primary structure comprises 693 residues: TBC1 domain family member 12 (693 aa).

At Met1 the chain carries N-acetylmethionine. 3 disordered regions span residues 1–57 (MMGP…EAPP), 91–120 (RGSG…RRTC), and 156–229 (AAGD…TTVR). A compositionally biased stretch (low complexity) spans 40 to 49 (GAVAAEPPGE). The span at 106–115 (QDRRGPEEAR) shows a compositional bias: basic and acidic residues. Ser202 and Ser233 each carry phosphoserine. A Rab-GAP TBC domain is found at 402-610 (GLPPSVRGKV…RVWDVFCRDG (209 aa)).

Interacts with RAB11A; this interaction recruits TBC1D12 to RAB11A-positive recycling endosomes.

The protein resides in the endosome. In terms of biological role, RAB11A-binding protein that plays a role in neurite outgrowth. The chain is TBC1 domain family member 12 (Tbc1d12) from Rattus norvegicus (Rat).